Here is a 300-residue protein sequence, read N- to C-terminus: Protoheme IX farnesyltransferase 1 (300 aa).

The next 9 membrane-spanning stretches (helical) occupy residues 28–48 (VVAL…PTIL), 54–74 (VAGL…NHLI), 100–120 (ALLF…VFTN), 122–142 (LTAW…TAYL), 149–169 (NIVI…TAVT), 176–196 (ALLL…ALAI), 222–242 (CILL…LVGM), 243–263 (SGPL…YKAW), and 280–300 (FSIY…YLWA).

Belongs to the UbiA prenyltransferase family. Protoheme IX farnesyltransferase subfamily.

It localises to the cell inner membrane. The catalysed reaction is heme b + (2E,6E)-farnesyl diphosphate + H2O = Fe(II)-heme o + diphosphate. It participates in porphyrin-containing compound metabolism; heme O biosynthesis; heme O from protoheme: step 1/1. In terms of biological role, converts heme B (protoheme IX) to heme O by substitution of the vinyl group on carbon 2 of heme B porphyrin ring with a hydroxyethyl farnesyl side group. This Shewanella sp. (strain ANA-3) protein is Protoheme IX farnesyltransferase 1.